A 162-amino-acid polypeptide reads, in one-letter code: Large ribosomal subunit protein uL30 (162 aa).

It belongs to the universal ribosomal protein uL30 family. In terms of assembly, part of the 50S ribosomal subunit.

This Korarchaeum cryptofilum (strain OPF8) protein is Large ribosomal subunit protein uL30.